We begin with the raw amino-acid sequence, 175 residues long: MAIDFKEHIASVKDFPNKGIIFRDITPILQDGKLYRAATHELAEYAKSRGAEVIVGPEARGFIVGCPVATELGIGFVPARKPHKLPREVESASYDLEYGSNVLEMHKDAIKPGQKVVICDDLMATAGTLHATKELIENLGGEVVGAAFYIELTDLKGREQFPDLDIYSLVKYHGA.

This sequence belongs to the purine/pyrimidine phosphoribosyltransferase family. In terms of assembly, homodimer.

Its subcellular location is the cytoplasm. It carries out the reaction AMP + diphosphate = 5-phospho-alpha-D-ribose 1-diphosphate + adenine. The protein operates within purine metabolism; AMP biosynthesis via salvage pathway; AMP from adenine: step 1/1. Functionally, catalyzes a salvage reaction resulting in the formation of AMP, that is energically less costly than de novo synthesis. This is Adenine phosphoribosyltransferase from Lactobacillus gasseri (strain ATCC 33323 / DSM 20243 / BCRC 14619 / CIP 102991 / JCM 1131 / KCTC 3163 / NCIMB 11718 / NCTC 13722 / AM63).